A 440-amino-acid polypeptide reads, in one-letter code: Ribosomal protein uS12 methylthiotransferase RimO (440 aa).

Positions 8 to 124 (TSVFLLSLGC…VLDALGARYH (117 aa)) constitute an MTTase N-terminal domain. Cysteine 17, cysteine 53, cysteine 87, cysteine 148, cysteine 152, and cysteine 155 together coordinate [4Fe-4S] cluster. The region spanning 134 to 363 (LTPPHSSYLK…MELQEEIARK (230 aa)) is the Radical SAM core domain. Residues 366-437 (EAFVGSLMTV…AYELHGTVES (72 aa)) form the TRAM domain.

The protein belongs to the methylthiotransferase family. RimO subfamily. [4Fe-4S] cluster serves as cofactor.

It is found in the cytoplasm. The catalysed reaction is L-aspartate(89)-[ribosomal protein uS12]-hydrogen + (sulfur carrier)-SH + AH2 + 2 S-adenosyl-L-methionine = 3-methylsulfanyl-L-aspartate(89)-[ribosomal protein uS12]-hydrogen + (sulfur carrier)-H + 5'-deoxyadenosine + L-methionine + A + S-adenosyl-L-homocysteine + 2 H(+). Catalyzes the methylthiolation of an aspartic acid residue of ribosomal protein uS12. The polypeptide is Ribosomal protein uS12 methylthiotransferase RimO (Chlorobium luteolum (strain DSM 273 / BCRC 81028 / 2530) (Pelodictyon luteolum)).